A 124-amino-acid polypeptide reads, in one-letter code: Small ribosomal subunit protein bS6 (124 aa).

Residues 96–124 (ETGPSPMMKEVQREEAKKAAAAQPAEAQA) form a disordered region. The span at 114 to 124 (AAAAQPAEAQA) shows a compositional bias: low complexity.

The protein belongs to the bacterial ribosomal protein bS6 family.

Functionally, binds together with bS18 to 16S ribosomal RNA. This Burkholderia orbicola (strain AU 1054) protein is Small ribosomal subunit protein bS6.